Here is a 291-residue protein sequence, read N- to C-terminus: Protease HtpX (291 aa).

2 consecutive transmembrane segments (helical) span residues 4–24 (IVIF…LLTC) and 37–57 (IISG…SKFI). His-139 lines the Zn(2+) pocket. Glu-140 is a catalytic residue. Zn(2+) is bound at residue His-143. Helical transmembrane passes span 147–167 (GDMV…IFIS) and 195–215 (IVST…VLWF). Residue Glu-220 participates in Zn(2+) binding.

The protein belongs to the peptidase M48B family. Requires Zn(2+) as cofactor.

The protein localises to the cell membrane. In Baumannia cicadellinicola subsp. Homalodisca coagulata, this protein is Protease HtpX.